A 255-amino-acid polypeptide reads, in one-letter code: Small ribosomal subunit protein eS1 (255 aa).

A2 is modified (N-acetylalanine; partial).

The protein belongs to the eukaryotic ribosomal protein eS1 family. As to quaternary structure, component of the small ribosomal subunit. Mature ribosomes consist of a small (40S) and a large (60S) subunit. The 40S subunit contains about 33 different proteins and 1 molecule of RNA (18S). The 60S subunit contains about 49 different proteins and 3 molecules of RNA (25S, 5.8S and 5S).

It localises to the cytoplasm. The chain is Small ribosomal subunit protein eS1 (rps1) from Pyrenophora tritici-repentis (strain Pt-1C-BFP) (Wheat tan spot fungus).